Here is a 417-residue protein sequence, read N- to C-terminus: Phosphoglycerate kinase, cytosolic (417 aa).

(2R)-3-phosphoglycerate-binding residues include V23, D24, F25, N26, R39, S61, H62, G64, R65, R132, H168, and R169. ADP contacts are provided by G214 and A215. Position 214 (G214) interacts with CDP. A215 and K216 together coordinate AMP. A215 contacts ATP. A215 is a Mg(2+) binding site. A (2R)-3-phosphoglycerate-binding site is contributed by K216. D219 lines the CDP pocket. Residue D219 coordinates Mg(2+). Residues K220 and G238 each contribute to the ADP site. Position 220 (K220) interacts with AMP. Residue K220 coordinates ATP. Residue G238 coordinates CDP. A239 and A311 together coordinate AMP. Residues A239 and A311 each contribute to the ATP site. A311 and N335 together coordinate ADP. CDP contacts are provided by G336 and F341. The ADP site is built by F341, E342, D374, and S375. Residue E342 participates in AMP binding. Positions 342, 374, and 375 each coordinate ATP. D374 lines the Mg(2+) pocket.

This sequence belongs to the phosphoglycerate kinase family. As to quaternary structure, monomer. It depends on Mg(2+) as a cofactor.

The protein resides in the cytoplasm. It catalyses the reaction (2R)-3-phosphoglycerate + ATP = (2R)-3-phospho-glyceroyl phosphate + ADP. Its pathway is carbohydrate degradation; glycolysis; pyruvate from D-glyceraldehyde 3-phosphate: step 2/5. The sequence is that of Phosphoglycerate kinase, cytosolic (PGKB) from Leishmania major.